The chain runs to 149 residues: Large ribosomal subunit protein eL19 (149 aa).

Residues V45–G130 form a disordered region. A compositionally biased stretch (basic residues) spans N58–A85. A compositionally biased stretch (basic and acidic residues) spans N90 to G113.

It belongs to the eukaryotic ribosomal protein eL19 family. In terms of assembly, part of the 50S ribosomal subunit.

Binds to the 23S rRNA. Located at the polypeptide exit tunnel on the outside of the subunit. The sequence is that of Large ribosomal subunit protein eL19 from Haloarcula marismortui (strain ATCC 43049 / DSM 3752 / JCM 8966 / VKM B-1809) (Halobacterium marismortui).